The primary structure comprises 415 residues: Tyrosine--tRNA ligase (415 aa).

Tyrosine 34 serves as a coordination point for L-tyrosine. The 'HIGH' region signature appears at 39–48; that stretch reads PSADSLHLGN. The L-tyrosine site is built by tyrosine 162 and glutamine 166. Residues 224-228 carry the 'KMSKS' region motif; the sequence is KFGKS. Lysine 227 provides a ligand contact to ATP. Residues 346–413 enclose the S4 RNA-binding domain; sequence IKIIDLLNLA…KRNYFLILWN (68 aa).

It belongs to the class-I aminoacyl-tRNA synthetase family. TyrS type 1 subfamily. In terms of assembly, homodimer.

It is found in the cytoplasm. The catalysed reaction is tRNA(Tyr) + L-tyrosine + ATP = L-tyrosyl-tRNA(Tyr) + AMP + diphosphate + H(+). In terms of biological role, catalyzes the attachment of tyrosine to tRNA(Tyr) in a two-step reaction: tyrosine is first activated by ATP to form Tyr-AMP and then transferred to the acceptor end of tRNA(Tyr). The chain is Tyrosine--tRNA ligase from Ureaplasma parvum serovar 3 (strain ATCC 27815 / 27 / NCTC 11736).